The primary structure comprises 294 residues: Cytidine deaminase (294 aa).

CMP/dCMP-type deaminase domains follow at residues 48 to 168 (DDNT…FGPN) and 187 to 294 (ETTD…YYTF). Substrate is bound at residue 89–91 (NME). Residue His102 participates in Zn(2+) binding. The active-site Proton donor is the Glu104. Zn(2+) contacts are provided by Cys129 and Cys132.

The protein belongs to the cytidine and deoxycytidylate deaminase family. In terms of assembly, homodimer. The cofactor is Zn(2+).

It catalyses the reaction cytidine + H2O + H(+) = uridine + NH4(+). The catalysed reaction is 2'-deoxycytidine + H2O + H(+) = 2'-deoxyuridine + NH4(+). This enzyme scavenges exogenous and endogenous cytidine and 2'-deoxycytidine for UMP synthesis. The sequence is that of Cytidine deaminase from Photorhabdus laumondii subsp. laumondii (strain DSM 15139 / CIP 105565 / TT01) (Photorhabdus luminescens subsp. laumondii).